The primary structure comprises 142 residues: MELTKIATQNDINRQWIVLDAKDKVFGRLITEIATLLRGKHKPCFTPHIDCGDFVVIINATEVKFTGMKLKDKEYFTHSGYFGSTKSKTLQEMLEKTPEKLYHLAVRGMLPKNKLGRAMLKKLKVYRGSEHPHSAQVAKSSK.

This sequence belongs to the universal ribosomal protein uL13 family. Part of the 50S ribosomal subunit.

In terms of biological role, this protein is one of the early assembly proteins of the 50S ribosomal subunit, although it is not seen to bind rRNA by itself. It is important during the early stages of 50S assembly. The protein is Large ribosomal subunit protein uL13 of Helicobacter hepaticus (strain ATCC 51449 / 3B1).